The chain runs to 332 residues: Acetyl-coenzyme A carboxylase carboxyl transferase subunit alpha (332 aa).

A CoA carboxyltransferase C-terminal domain is found at 44-298 (QLESRAQNLR…KETLVNNLEE (255 aa)).

Belongs to the AccA family. As to quaternary structure, acetyl-CoA carboxylase is a heterohexamer composed of biotin carboxyl carrier protein (AccB), biotin carboxylase (AccC) and two subunits each of ACCase subunit alpha (AccA) and ACCase subunit beta (AccD).

The protein resides in the cytoplasm. The enzyme catalyses N(6)-carboxybiotinyl-L-lysyl-[protein] + acetyl-CoA = N(6)-biotinyl-L-lysyl-[protein] + malonyl-CoA. It participates in lipid metabolism; malonyl-CoA biosynthesis; malonyl-CoA from acetyl-CoA: step 1/1. Component of the acetyl coenzyme A carboxylase (ACC) complex. First, biotin carboxylase catalyzes the carboxylation of biotin on its carrier protein (BCCP) and then the CO(2) group is transferred by the carboxyltransferase to acetyl-CoA to form malonyl-CoA. This chain is Acetyl-coenzyme A carboxylase carboxyl transferase subunit alpha, found in Crocosphaera subtropica (strain ATCC 51142 / BH68) (Cyanothece sp. (strain ATCC 51142)).